We begin with the raw amino-acid sequence, 540 residues long: O-phosphoserine--tRNA(Cys) ligase (540 aa).

Substrate-binding positions include 188 to 190 (HMT), 233 to 235 (SAS), 275 to 276 (YY), and Asn319.

This sequence belongs to the class-II aminoacyl-tRNA synthetase family. O-phosphoseryl-tRNA(Cys) synthetase subfamily. Homotetramer. Interacts with SepCysS.

It carries out the reaction tRNA(Cys) + O-phospho-L-serine + ATP = O-phospho-L-seryl-tRNA(Cys) + AMP + diphosphate. In terms of biological role, catalyzes the attachment of O-phosphoserine (Sep) to tRNA(Cys). The chain is O-phosphoserine--tRNA(Cys) ligase from Methanococcus aeolicus (strain ATCC BAA-1280 / DSM 17508 / OCM 812 / Nankai-3).